The sequence spans 614 residues: Baeyer-Villiger monooxygenase peniC (614 aa).

Residues Glu99, 107 to 110 (TWHW), Asp119, and Tyr125 contribute to the FAD site. Residues 255 to 261 (TGASGVQ), 278 to 279 (RT), and 398 to 399 (KR) each bind NADP(+).

The protein belongs to the FAD-binding monooxygenase family. Requires FAD as cofactor.

The enzyme catalyses gamma-lactone-2-keto[5.5.5.5]fenestrane + NADPH + O2 + H(+) = penifulvin A + NADP(+) + H2O. It participates in secondary metabolite biosynthesis; terpenoid biosynthesis. In terms of biological role, baeyer-Villiger monooxygenase; part of the gene cluster that mediates the biosynthesis of penifulvin A, a potent insecticidal sesquiterpene that features a [5.5.5.6]dioxafenestrane ring. Within the pathway, peniC is responsible for the final regioselective Baeyer-Villiger oxidation of gamma-lactone-2-keto[5.5.5.5]fenestran between C1 and C2 to form the delta-lactone moiety of penifulvin A. The first step of the pathway is performed by the sesquiterpene cyclase peniA that generates the angular triquinane scaffold silphinene via cyclization of the linear farnesyl pyrophosphate (FPP). The cytochrome P450 monooxygenase peniB and the flavin-dependent monooxygenase peniC then catalyze a series of oxidation reactions to transform silphinene into penifulvin A. The sequence is that of Baeyer-Villiger monooxygenase peniC from Penicillium patulum (Penicillium griseofulvum).